A 453-amino-acid polypeptide reads, in one-letter code: tRNA modification GTPase MnmE (453 aa).

(6S)-5-formyl-5,6,7,8-tetrahydrofolate is bound by residues arginine 22, glutamate 79, and lysine 119. Residues 215–376 (GMKVVIAGRP…LKLHLKSLMG (162 aa)) enclose the TrmE-type G domain. K(+) is bound at residue asparagine 225. GTP contacts are provided by residues 225–230 (NAGKSS), 244–250 (TEIAGTT), 269–272 (DTAG), and 334–337 (NKAD). Serine 229 is a Mg(2+) binding site. The K(+) site is built by threonine 244, isoleucine 246, and threonine 249. Residue threonine 250 coordinates Mg(2+). Lysine 453 contributes to the (6S)-5-formyl-5,6,7,8-tetrahydrofolate binding site.

Belongs to the TRAFAC class TrmE-Era-EngA-EngB-Septin-like GTPase superfamily. TrmE GTPase family. As to quaternary structure, homodimer. Heterotetramer of two MnmE and two MnmG subunits. K(+) is required as a cofactor.

The protein localises to the cytoplasm. Functionally, exhibits a very high intrinsic GTPase hydrolysis rate. Involved in the addition of a carboxymethylaminomethyl (cmnm) group at the wobble position (U34) of certain tRNAs, forming tRNA-cmnm(5)s(2)U34. In Shewanella sp. (strain W3-18-1), this protein is tRNA modification GTPase MnmE.